We begin with the raw amino-acid sequence, 83 residues long: Erabutoxin c (83 aa).

The signal sequence occupies residues 1 to 21 (MKTLLLTLVVVTIVCLDLGYT). Positions 24 to 38 (CFNHQSSQPQTTKTC) are loop I. 4 disulfide bridges follow: Cys24-Cys45, Cys38-Cys62, Cys64-Cys75, and Cys76-Cys81. The stretch between loop I and loop II stretch occupies residues 39 to 44 (SPGESS). Residues 45 to 62 (CYHKQWSDFRGTIIERGC) form a loop II region. Residues 64 to 75 (CPTVKPGINLSC) form a loop III region.

The protein belongs to the three-finger toxin family. Short-chain subfamily. Type I alpha-neurotoxin sub-subfamily. Expressed by the venom gland.

It is found in the secreted. Functionally, binds to muscle nicotinic acetylcholine receptor (nAChR) and inhibit acetylcholine from binding to the receptor, thereby impairing neuromuscular transmission. Binds to Torpedo marmorata nAChR (Kd=0.14 nM). The protein is Erabutoxin c of Laticauda semifasciata (Black-banded sea krait).